Reading from the N-terminus, the 423-residue chain is Glucose-1-phosphate adenylyltransferase (423 aa).

Alpha-D-glucose 1-phosphate is bound by residues Tyr-100, Gly-165, 180–181 (EK), and Ser-191.

This sequence belongs to the bacterial/plant glucose-1-phosphate adenylyltransferase family. In terms of assembly, homotetramer.

The catalysed reaction is alpha-D-glucose 1-phosphate + ATP + H(+) = ADP-alpha-D-glucose + diphosphate. The protein operates within glycan biosynthesis; glycogen biosynthesis. Involved in the biosynthesis of ADP-glucose, a building block required for the elongation reactions to produce glycogen. Catalyzes the reaction between ATP and alpha-D-glucose 1-phosphate (G1P) to produce pyrophosphate and ADP-Glc. The sequence is that of Glucose-1-phosphate adenylyltransferase from Lachnospira eligens (strain ATCC 27750 / DSM 3376 / VPI C15-48 / C15-B4) (Eubacterium eligens).